Here is a 123-residue protein sequence, read N- to C-terminus: Large ribosomal subunit protein uL18 (123 aa).

It belongs to the universal ribosomal protein uL18 family. Part of the 50S ribosomal subunit; part of the 5S rRNA/L5/L18/L25 subcomplex. Contacts the 5S and 23S rRNAs.

Functionally, this is one of the proteins that bind and probably mediate the attachment of the 5S RNA into the large ribosomal subunit, where it forms part of the central protuberance. The chain is Large ribosomal subunit protein uL18 from Desulforudis audaxviator (strain MP104C).